Here is a 296-residue protein sequence, read N- to C-terminus: MFVTLIKPLARLHPRAWDFVQLVRLDRPIGIYLLLWPTLWSLWIAADGVPELKNLLIFVLGVILMRAAGCVINDFADRNFDGHVARTKARPLATGKISVREAWITFAVLVALSFGLVLLTNATTVWLSFGAVAVASLYPFMKRYTYYPQVVLGAAYSWGILMAFTAERGELPASAWLLFLANVLWTVAYDSYYAMTDREDDLKIGIKSTAILFGDADRLIIGSLQGLTLLLLALAGSRFELGLYFYLGLAVAAACFVWEAWSTRDRDPQACFRAFLHNHWAGLAIFLGTVADYALR.

8 consecutive transmembrane segments (helical) span residues 29-49 (IGIY…ADGV), 55-75 (LLIF…INDF), 102-122 (AWIT…LTNA), 146-166 (YYPQ…AFTA), 169-189 (GELP…TVAY), 219-239 (LIIG…GSRF), 241-261 (LGLY…WEAW), and 275-295 (FLHN…DYAL).

The protein belongs to the UbiA prenyltransferase family. Mg(2+) serves as cofactor.

It localises to the cell inner membrane. It catalyses the reaction all-trans-octaprenyl diphosphate + 4-hydroxybenzoate = 4-hydroxy-3-(all-trans-octaprenyl)benzoate + diphosphate. It functions in the pathway cofactor biosynthesis; ubiquinone biosynthesis. Catalyzes the prenylation of para-hydroxybenzoate (PHB) with an all-trans polyprenyl group. Mediates the second step in the final reaction sequence of ubiquinone-8 (UQ-8) biosynthesis, which is the condensation of the polyisoprenoid side chain with PHB, generating the first membrane-bound Q intermediate 3-octaprenyl-4-hydroxybenzoate. The protein is 4-hydroxybenzoate octaprenyltransferase of Pseudomonas aeruginosa (strain UCBPP-PA14).